A 147-amino-acid chain; its full sequence is uncharacterized protein (147 aa).

The helical transmembrane segment at 63–79 (LFIVACSAVFATIAYIN) threads the bilayer.

It belongs to the FUN14 family.

It localises to the membrane. This is an uncharacterized protein from Schizosaccharomyces pombe (strain 972 / ATCC 24843) (Fission yeast).